A 128-amino-acid polypeptide reads, in one-letter code: Ribonuclease P protein component (128 aa).

It belongs to the RnpA family. In terms of assembly, consists of a catalytic RNA component (M1 or rnpB) and a protein subunit.

The enzyme catalyses Endonucleolytic cleavage of RNA, removing 5'-extranucleotides from tRNA precursor.. RNaseP catalyzes the removal of the 5'-leader sequence from pre-tRNA to produce the mature 5'-terminus. It can also cleave other RNA substrates such as 4.5S RNA. The protein component plays an auxiliary but essential role in vivo by binding to the 5'-leader sequence and broadening the substrate specificity of the ribozyme. The protein is Ribonuclease P protein component of Prochlorococcus marinus (strain MIT 9312).